The chain runs to 322 residues: N-acetyl-gamma-glutamyl-phosphate reductase (322 aa).

The active site involves C117.

It belongs to the NAGSA dehydrogenase family. Type 2 subfamily.

The protein resides in the cytoplasm. It carries out the reaction N-acetyl-L-glutamate 5-semialdehyde + phosphate + NADP(+) = N-acetyl-L-glutamyl 5-phosphate + NADPH + H(+). The protein operates within amino-acid biosynthesis; L-arginine biosynthesis; N(2)-acetyl-L-ornithine from L-glutamate: step 3/4. Functionally, catalyzes the NADPH-dependent reduction of N-acetyl-5-glutamyl phosphate to yield N-acetyl-L-glutamate 5-semialdehyde. The protein is N-acetyl-gamma-glutamyl-phosphate reductase of Trichormus variabilis (strain ATCC 29413 / PCC 7937) (Anabaena variabilis).